A 138-amino-acid chain; its full sequence is MSSSGTSITCEVGLQLIVPDRAPVPLVARLDYSVDDPYAIRAAFHVGDDEPVEWIFARELLTVGIIRETGEGDVRIWPSQDGKERMVNIALSSPFGQARFHAQVAPLSEFLHRTYELVPAGQESDYIDIDAEIAEHLS.

The protein belongs to the SsgA family. As to quaternary structure, monomer. Interacts with SsgA. Interacts with FtsZ (via N-terminus).

The protein localises to the cell septum. Its function is as follows. Involved in sporulation-specific cell division. Required for early stages of sporulation. Important in the process of growth cessation prior to sporulation-specific cell division. Recruits cell division protein FtsZ to the future septum sites and tethers the contractile ring structure (Z ring) to the cytoplasmic membrane during sporulation. Stimulates polymerization and filament length of FtsZ in vitro. The protein is Sporulation-specific cell division protein SsgB of Thermobifida fusca (strain YX).